A 214-amino-acid polypeptide reads, in one-letter code: LOB domain-containing protein 7 (214 aa).

In terms of domain architecture, LOB spans 12-113; sequence TACAACKHQR…TELNLTRQQI (102 aa).

The protein belongs to the LOB domain-containing protein family.

This is LOB domain-containing protein 7 (LBD7) from Arabidopsis thaliana (Mouse-ear cress).